Here is a 92-residue protein sequence, read N- to C-terminus: RPQIQVYSRHPPENGKPNILNCYVTQFHPPQIEIQMLKNGEIIPKVEMSDLSFSKDWSFYILAHTEFTPTETDQYACRVNHVSMDKPMTVNW.

One can recognise an Ig-like C1-type domain in the interval 2-89 (PQIQVYSRHP…NHVSMDKPMT (88 aa)). The cysteines at positions 22 and 77 are disulfide-linked.

Belongs to the beta-2-microglobulin family. In terms of assembly, heterodimer of an alpha chain and a beta chain. Beta-2-microglobulin is the beta-chain of major histocompatibility complex class I molecules.

It localises to the secreted. In terms of biological role, component of the class I major histocompatibility complex (MHC). Involved in the presentation of peptide antigens to the immune system. This chain is Beta-2-microglobulin (B2m), found in Mus spretus (Western Mediterranean mouse).